A 448-amino-acid chain; its full sequence is Methylenetetrahydrofolate--tRNA-(uracil-5-)-methyltransferase TrmFO (448 aa).

Position 13–18 (13–18 (GAGLAG)) interacts with FAD.

Belongs to the MnmG family. TrmFO subfamily. FAD serves as cofactor.

It localises to the cytoplasm. The catalysed reaction is uridine(54) in tRNA + (6R)-5,10-methylene-5,6,7,8-tetrahydrofolate + NADH + H(+) = 5-methyluridine(54) in tRNA + (6S)-5,6,7,8-tetrahydrofolate + NAD(+). The enzyme catalyses uridine(54) in tRNA + (6R)-5,10-methylene-5,6,7,8-tetrahydrofolate + NADPH + H(+) = 5-methyluridine(54) in tRNA + (6S)-5,6,7,8-tetrahydrofolate + NADP(+). Its function is as follows. Catalyzes the folate-dependent formation of 5-methyl-uridine at position 54 (M-5-U54) in all tRNAs. In Streptococcus pyogenes serotype M12 (strain MGAS2096), this protein is Methylenetetrahydrofolate--tRNA-(uracil-5-)-methyltransferase TrmFO.